Reading from the N-terminus, the 404-residue chain is Aspartokinase 1 (404 aa).

7–10 (KFGG) is an ATP binding site. Residue 25 to 30 (HIKEAI) participates in substrate binding. Serine 41 serves as a coordination point for ATP. Residues 52 to 54 (TDS), glutamate 79, 130 to 131 (LA), 155 to 158 (RGGS), and serine 158 each bind substrate. ATP contacts are provided by residues 178 to 179 (TD) and 184 to 189 (MTADPR). Substrate-binding positions include 299-301 (SVD), 355-356 (VT), 369-370 (PI), and 376-377 (SH). Residues 344 to 404 (AVGAGIMGVP…ALHEVFELSK (61 aa)) form the ACT domain.

This sequence belongs to the aspartokinase family. In terms of assembly, tetramer consisting of 2 isoforms Alpha (catalytic) and 2 isoforms Beta (function not known).

The enzyme catalyses L-aspartate + ATP = 4-phospho-L-aspartate + ADP. Its pathway is amino-acid biosynthesis; L-lysine biosynthesis via DAP pathway; (S)-tetrahydrodipicolinate from L-aspartate: step 1/4. It participates in amino-acid biosynthesis; L-methionine biosynthesis via de novo pathway; L-homoserine from L-aspartate: step 1/3. The protein operates within amino-acid biosynthesis; L-threonine biosynthesis; L-threonine from L-aspartate: step 1/5. Diaminopimelate-sensitive. Its function is as follows. Catalyzes the phosphorylation of the beta-carboxyl group of aspartic acid with ATP to yield 4-phospho-L-aspartate, which is involved in the branched biosynthetic pathway leading to the biosynthesis of amino acids threonine, isoleucine and methionine. In Bacillus subtilis (strain 168), this protein is Aspartokinase 1 (dapG).